Reading from the N-terminus, the 221-residue chain is Enolase-phosphatase E1 (221 aa).

2 residues coordinate Mg(2+): aspartate 9 and glutamate 11. Residues 116 to 117 (SS) and lysine 152 each bind substrate. Aspartate 180 is a binding site for Mg(2+).

It belongs to the HAD-like hydrolase superfamily. MasA/MtnC family. As to quaternary structure, monomer. Mg(2+) serves as cofactor.

The protein resides in the cytoplasm. The protein localises to the nucleus. It catalyses the reaction 5-methylsulfanyl-2,3-dioxopentyl phosphate + H2O = 1,2-dihydroxy-5-(methylsulfanyl)pent-1-en-3-one + phosphate. It functions in the pathway amino-acid biosynthesis; L-methionine biosynthesis via salvage pathway; L-methionine from S-methyl-5-thio-alpha-D-ribose 1-phosphate: step 3/6. The protein operates within amino-acid biosynthesis; L-methionine biosynthesis via salvage pathway; L-methionine from S-methyl-5-thio-alpha-D-ribose 1-phosphate: step 4/6. In terms of biological role, bifunctional enzyme that catalyzes the enolization of 2,3-diketo-5-methylthiopentyl-1-phosphate (DK-MTP-1-P) into the intermediate 2-hydroxy-3-keto-5-methylthiopentenyl-1-phosphate (HK-MTPenyl-1-P), which is then dephosphorylated to form the acireductone 1,2-dihydroxy-3-keto-5-methylthiopentene (DHK-MTPene). This is Enolase-phosphatase E1 from Kluyveromyces lactis (strain ATCC 8585 / CBS 2359 / DSM 70799 / NBRC 1267 / NRRL Y-1140 / WM37) (Yeast).